A 215-amino-acid polypeptide reads, in one-letter code: Probable transaldolase (215 aa).

The active-site Schiff-base intermediate with substrate is the lysine 83.

Belongs to the transaldolase family. Type 3B subfamily.

It is found in the cytoplasm. It carries out the reaction D-sedoheptulose 7-phosphate + D-glyceraldehyde 3-phosphate = D-erythrose 4-phosphate + beta-D-fructose 6-phosphate. The protein operates within carbohydrate degradation; pentose phosphate pathway; D-glyceraldehyde 3-phosphate and beta-D-fructose 6-phosphate from D-ribose 5-phosphate and D-xylulose 5-phosphate (non-oxidative stage): step 2/3. Functionally, transaldolase is important for the balance of metabolites in the pentose-phosphate pathway. The polypeptide is Probable transaldolase (Desulforapulum autotrophicum (strain ATCC 43914 / DSM 3382 / VKM B-1955 / HRM2) (Desulfobacterium autotrophicum)).